Here is a 211-residue protein sequence, read N- to C-terminus: Probable GTP-binding protein EngB (211 aa).

An EngB-type G domain is found at 13–188 (SGYEIAFAGR…ASVMAGRLHF (176 aa)). GTP contacts are provided by residues 21–28 (GRSNAGKS), 48–52 (GRTQM), 67–70 (DLPG), 134–137 (TKAD), and 167–169 (FSS). Ser-28 and Thr-50 together coordinate Mg(2+).

Belongs to the TRAFAC class TrmE-Era-EngA-EngB-Septin-like GTPase superfamily. EngB GTPase family. Mg(2+) serves as cofactor.

Its function is as follows. Necessary for normal cell division and for the maintenance of normal septation. This is Probable GTP-binding protein EngB from Acinetobacter baumannii (strain ATCC 17978 / DSM 105126 / CIP 53.77 / LMG 1025 / NCDC KC755 / 5377).